A 112-amino-acid polypeptide reads, in one-letter code: PNTVIYNCSECHKRFRSKSGFVKHQKTHTGETPFVCFVCEQRFVCHSALIGHQRIHTGEKPFSCTECGKCFSRRSHLNSHHKTHTGEKSFLCFACGKCFASRSHLTAHHRTH.

4 C2H2-type zinc fingers span residues 6-28, 34-56, 62-84, and 90-112; these read YNCSECHKRFRSKSGFVKHQKTH, FVCFVCEQRFVCHSALIGHQRIH, FSCTECGKCFSRRSHLNSHHKTH, and FLCFACGKCFASRSHLTAHHRTH.

This sequence belongs to the krueppel C2H2-type zinc-finger protein family.

Its subcellular location is the nucleus. Its function is as follows. May be involved in transcriptional regulation. In Xenopus laevis (African clawed frog), this protein is Gastrula zinc finger protein XlCGF16.1.